The following is a 578-amino-acid chain: Arginine--tRNA ligase (578 aa).

The 'HIGH' region motif lies at 123 to 133 (PNLAKEMHVGH).

The protein belongs to the class-I aminoacyl-tRNA synthetase family. As to quaternary structure, monomer.

The protein localises to the cytoplasm. It catalyses the reaction tRNA(Arg) + L-arginine + ATP = L-arginyl-tRNA(Arg) + AMP + diphosphate. This chain is Arginine--tRNA ligase, found in Hahella chejuensis (strain KCTC 2396).